Here is a 487-residue protein sequence, read N- to C-terminus: N-succinylglutamate 5-semialdehyde dehydrogenase (487 aa).

NAD(+) is bound at residue 221 to 226 (GSSRTG). Active-site residues include Glu244 and Cys278.

This sequence belongs to the aldehyde dehydrogenase family. AstD subfamily.

The catalysed reaction is N-succinyl-L-glutamate 5-semialdehyde + NAD(+) + H2O = N-succinyl-L-glutamate + NADH + 2 H(+). It functions in the pathway amino-acid degradation; L-arginine degradation via AST pathway; L-glutamate and succinate from L-arginine: step 4/5. In terms of biological role, catalyzes the NAD-dependent reduction of succinylglutamate semialdehyde into succinylglutamate. This Pseudomonas aeruginosa (strain ATCC 15692 / DSM 22644 / CIP 104116 / JCM 14847 / LMG 12228 / 1C / PRS 101 / PAO1) protein is N-succinylglutamate 5-semialdehyde dehydrogenase (astD).